The chain runs to 309 residues: NADH-cytochrome b5 reductase 2 (309 aa).

A helical transmembrane segment spans residues 3–23 (ILTAPVLIGVSIVVITVLYLF). The 113-residue stretch at 48–160 (SVKYPLPLIE…RGPNGLLVYN (113 aa)) folds into the FAD-binding FR-type domain. Residues 140–170 (DNMKIGDTIDFRGPNGLLVYNGKGKFAIRPD) and 179–214 (KFKHVAMIAGGTGITPMLQLIRSITADSFDETVCSL) contribute to the FAD site.

It belongs to the flavoprotein pyridine nucleotide cytochrome reductase family. FAD is required as a cofactor.

It localises to the membrane. The enzyme catalyses 2 Fe(III)-[cytochrome b5] + NADH = 2 Fe(II)-[cytochrome b5] + NAD(+) + H(+). NADH-cytochrome b5 reductases are involved in desaturation and elongation of fatty acids, cholesterol biosynthesis and drug metabolism. This is NADH-cytochrome b5 reductase 2 (cyb5r2) from Danio rerio (Zebrafish).